Reading from the N-terminus, the 54-residue chain is Large ribosomal subunit protein bL33 (54 aa).

The protein belongs to the bacterial ribosomal protein bL33 family.

In Corynebacterium urealyticum (strain ATCC 43042 / DSM 7109), this protein is Large ribosomal subunit protein bL33.